The primary structure comprises 137 residues: ATP synthase epsilon chain (137 aa).

It belongs to the ATPase epsilon chain family. As to quaternary structure, F-type ATPases have 2 components, CF(1) - the catalytic core - and CF(0) - the membrane proton channel. CF(1) has five subunits: alpha(3), beta(3), gamma(1), delta(1), epsilon(1). CF(0) has three main subunits: a, b and c.

It is found in the cell membrane. Its function is as follows. Produces ATP from ADP in the presence of a proton gradient across the membrane. This is ATP synthase epsilon chain from Caldicellulosiruptor bescii (strain ATCC BAA-1888 / DSM 6725 / KCTC 15123 / Z-1320) (Anaerocellum thermophilum).